A 231-amino-acid chain; its full sequence is Putative cobalt transport protein CbiM 1 (231 aa).

Helical transmembrane passes span 9 to 29 (PGPWWQIWWILSIPVFAYGIF), 41 to 61 (VLPLIAVSGAVIFVLSSLKLP), 74 to 94 (GMAVILFGPAITSVLSAIVLL), 107 to 127 (TFGANLMSMGIIGPFVAYAIY), 135 to 155 (VNFYVSAFVTATLADWVTYVV), and 181 to 201 (VFAITQIPLAILEASLITLLF).

It belongs to the CbiM family. Forms an energy-coupling factor (ECF) transporter complex composed of an ATP-binding protein (A component, CbiO), a transmembrane protein (T component, CbiQ) and 2 possible substrate-capture proteins (S components, CbiM and CbiN) of unknown stoichimetry.

It is found in the cell membrane. The protein operates within cofactor biosynthesis; adenosylcobalamin biosynthesis. Functionally, part of the energy-coupling factor (ECF) transporter complex CbiMNOQ involved in cobalt import. This chain is Putative cobalt transport protein CbiM 1, found in Methanosarcina barkeri (strain Fusaro / DSM 804).